A 311-amino-acid chain; its full sequence is UPF0324 membrane protein VV1_3166 (311 aa).

Helical transmembrane passes span 8–28 (FIFA…ALVL), 51–71 (LLSY…AIAV), 74–94 (DGIG…FLVA), 106–126 (LISA…APAI), 133–153 (IALA…IFPV), 165–185 (FGTW…AASA), 197–217 (LKLA…ILFA), 228–248 (LVLP…DLFP), 256–276 (GIFS…GCSI), and 289–309 (LIFG…WLLL).

The protein belongs to the UPF0324 family.

It is found in the cell membrane. The sequence is that of UPF0324 membrane protein VV1_3166 from Vibrio vulnificus (strain CMCP6).